The chain runs to 104 residues: L-rhamnose mutarotase (104 aa).

Tyrosine 18 provides a ligand contact to substrate. The active-site Proton donor is the histidine 22. Substrate-binding positions include tyrosine 41 and 76–77; that span reads WW.

It belongs to the rhamnose mutarotase family. Homodimer.

The protein resides in the cytoplasm. It carries out the reaction alpha-L-rhamnose = beta-L-rhamnose. It participates in carbohydrate metabolism; L-rhamnose metabolism. Involved in the anomeric conversion of L-rhamnose. The sequence is that of L-rhamnose mutarotase from Opitutus terrae (strain DSM 11246 / JCM 15787 / PB90-1).